The sequence spans 349 residues: Phosphoribosylformylglycinamidine cyclo-ligase (349 aa).

This sequence belongs to the AIR synthase family.

The protein localises to the cytoplasm. It carries out the reaction 2-formamido-N(1)-(5-O-phospho-beta-D-ribosyl)acetamidine + ATP = 5-amino-1-(5-phospho-beta-D-ribosyl)imidazole + ADP + phosphate + H(+). Its pathway is purine metabolism; IMP biosynthesis via de novo pathway; 5-amino-1-(5-phospho-D-ribosyl)imidazole from N(2)-formyl-N(1)-(5-phospho-D-ribosyl)glycinamide: step 2/2. The polypeptide is Phosphoribosylformylglycinamidine cyclo-ligase (Methanococcus maripaludis (strain C6 / ATCC BAA-1332)).